Consider the following 56-residue polypeptide: Arcadin-3 (56 aa).

The protein localises to the cytoplasm. It is found in the cytoskeleton. Its function is as follows. Part of an actin-like archaeal cytoskeleton. This Pyrobaculum calidifontis (strain DSM 21063 / JCM 11548 / VA1) protein is Arcadin-3.